The following is a 343-amino-acid chain: MEQHQGQAGMDLPPGFRFHPTDEELITHYLAKKVADARFAALAVAEADLNKCEPWDLPSLAKMGEKEWYFFCLKDRKYPTGLRTNRATESGYWKATGKDKDIFRRKALVGMKKTLVFYTGRAPKGEKSGWVMHEYRLHGKLHAAALGFLHGKPASSKNEWVLCRVFKKSLVEVGAAGGKKAAVVTMEMARGGSTSSSVADEIAMSSVVLPPLMDMSGAGAGAVDPATTAHVTCFSNALEGQFFNPTAVHGHGGGDSSPFMASFTQYGQLHHGVSLVQLLESCNGYGGLVDMAASGSQLQPAACGGERERLSASQDTGLTSDVNPEISSSSGQKFDHEAALWGY.

The 157-residue stretch at 12-168 (LPPGFRFHPT…EWVLCRVFKK (157 aa)) folds into the NAC domain. Residues 109-174 (VGMKKTLVFY…VFKKSLVEVG (66 aa)) mediate DNA binding. The disordered stretch occupies residues 304 to 333 (GGERERLSASQDTGLTSDVNPEISSSSGQK). Polar residues predominate over residues 311 to 332 (SASQDTGLTSDVNPEISSSSGQ).

As to expression, expressed in roots, tiller buds, stems, leaves, lamina joints and the young husks. Expressed in embryos, coleoptiles, radicles, leaf pulvinus, ligules, panicles, palea and lemma, anthers, and the internode of the peduncles. Expressed in young leaves, root meristems, florescence meristems and young spikelets.

It localises to the nucleus. Its function is as follows. Transcription factor involved in the regulation of tiller bud outgrowth, but does not seem to regulate tiller bud initiation. Possesses transactivation activity in yeast. Involved in the regulation of plant architecture and grain yield. Acts as a negative regulator of plant height and flowering time. Regulates directly key genes of the gibberellin (GA) pathway by binding to their promoters. Positively regulates leaf senescence in an age-dependent manner. Activates directly the expression of the chlorophyll degradation genes SGR and NYC3. Positively regulates the level of abscisic acid (ABA) by directly up-regulating the expression of the ABA biosynthetic genes NCED3 and ZEP, and down-regulating the ABA catabolic gene CYP707A5/ABA8OX1. Promotes salt-induced cell death accompanied by the loss of plasma membrane integrity, nuclear DNA fragmentation, and changes of caspase-like activity. Targets genes that encoded a reactive oxygen species (ROS) scavenger COX11 and a caspase-like protease AP37. Activates the potassium efflux channels GORK and SKOR. Acts as a positive regulator of drought and salt tolerance through ABA-mediated pathways. Acts as a negative regulator of root growth. Functions as an upstream integrator of auxin and cytokinin signals that affect CROWN ROOTLESS (CRL) and cyclin-dependent protein kinase (CDK) genes to regulate cell division during root development. Binds directly to the promoters of the auxin inactivation-related genes GH3.6 and GH3.8, the auxin signaling-related gene ARF25, and the cytokinin oxidase gene CKX4. Activates directly the expressions of the 1-aminocyclopropane-1-carboxylate oxidase genes ACO1 and ACO3, enhancing ethylene synthesis, and then retarding seedling establishment. This chain is NAC domain-containing protein 4, found in Oryza sativa subsp. japonica (Rice).